The sequence spans 262 residues: Adenosine deaminase RL5 (262 aa).

Cu cation is bound by residues Asn36, Tyr40, Met68, His73, Cys75, Asn114, Cys118, His135, Cys172, Cys175, Cys234, and Cys237.

The protein belongs to the purine nucleoside phosphorylase YfiH/LACC1 family. In terms of assembly, homodimer. Cu cation is required as a cofactor.

The catalysed reaction is adenosine + phosphate = alpha-D-ribose 1-phosphate + adenine. It catalyses the reaction S-methyl-5'-thioadenosine + phosphate = 5-(methylsulfanyl)-alpha-D-ribose 1-phosphate + adenine. It carries out the reaction inosine + phosphate = alpha-D-ribose 1-phosphate + hypoxanthine. The enzyme catalyses adenosine + H2O + H(+) = inosine + NH4(+). Functionally, purine nucleoside enzyme that catalyzes the phosphorolysis of adenosine and inosine nucleosides, yielding D-ribose 1-phosphate and the respective free bases, adenine and hypoxanthine. Also catalyzes the phosphorolysis of S-methyl-5'-thioadenosine into adenine and S-methyl-5-thio-alpha-D-ribose 1-phosphate. Also has adenosine deaminase activity. Also acts as a multicopper oxidase able to oxidize a wide variety of polyphenols and related compounds in vitro. Displays substrate preference as follows: syringaldazine &gt; 2,6-dimethoxyphenol &gt; veratryl alcohol &gt; guaiacol &gt; tetramethylbenzidine &gt; 4-methoxybenzyl alcohol &gt; 2,2'-azino-bis(3-ethylbenzthiazoline-6-sulfonic acid) (ABTS) &gt;&gt; phenol red &gt; 1-hydroxybenzotriazole. Cannot use 3,4-dimetoxybenzyl alcohol and violuric acid as substrates. As this enzyme is derived from a rumen microbial community, it may have a role in the digestion of complex plant materials such as ryegrass lignin. The chain is Adenosine deaminase RL5 from Unknown prokaryotic organism.